Reading from the N-terminus, the 241-residue chain is Glycerol-3-phosphate acyltransferase (241 aa).

A run of 6 helical transmembrane segments spans residues 3 to 23, 63 to 83, 97 to 117, 131 to 151, 156 to 176, and 198 to 218; these read ILYS…LLGS, IVFA…SAIV, YISP…PAYY, LIIS…LLVV, IVSL…WMPW, and LVNY…LVLV.

The protein belongs to the PlsY family. As to quaternary structure, probably interacts with PlsX.

It localises to the cell membrane. It catalyses the reaction an acyl phosphate + sn-glycerol 3-phosphate = a 1-acyl-sn-glycero-3-phosphate + phosphate. The protein operates within lipid metabolism; phospholipid metabolism. Catalyzes the transfer of an acyl group from acyl-phosphate (acyl-PO(4)) to glycerol-3-phosphate (G3P) to form lysophosphatidic acid (LPA). This enzyme utilizes acyl-phosphate as fatty acyl donor, but not acyl-CoA or acyl-ACP. The polypeptide is Glycerol-3-phosphate acyltransferase (Mycoplasmopsis agalactiae (strain NCTC 10123 / CIP 59.7 / PG2) (Mycoplasma agalactiae)).